The chain runs to 690 residues: Sodium-dependent phosphate transport protein 2B (690 aa).

Positions 1 to 42 are disordered; sequence MAPWPELGDAQPNPDKYLEGAAGQQPTAPDKSKETNKTDNTE. The Cytoplasmic segment spans residues 1-100; it reads MAPWPELGDA…ILCFFQGIGR (100 aa). Residues 30-40 are compositionally biased toward basic and acidic residues; the sequence is DKSKETNKTDN. The helical transmembrane segment at 101-121 threads the bilayer; that stretch reads LILLLGFLYFFVCSLDILSSA. Over 122 to 135 the chain is Extracellular; sequence FQLVGGKMAGQFFS. The helical transmembrane segment at 136–156 threads the bilayer; that stretch reads NSSIMSNPLLGLVIGVLVTVL. Topologically, residues 157–212 are cytoplasmic; the sequence is VQSSSTSTSIVVSMVSSSLLTVRAAIPIIMGANIGTSITNTIVALMQVGDRSEFRR. A helical membrane pass occupies residues 213–233; it reads AFAGATVHDFFNWLSVLVLLP. At 234–362 the chain is on the extracellular side; the sequence is VEVATHYLEI…IFVNFHLPDL (129 aa). N-linked (GlcNAc...) asparagine glycans are attached at residues asparagine 295, asparagine 308, asparagine 313, asparagine 321, and asparagine 340. Cysteine 303 and cysteine 350 are oxidised to a cystine. Residues 363–383 form a helical membrane-spanning segment; sequence AVGTILLILSLLVLCGCLIMI. The Cytoplasmic portion of the chain corresponds to 384–407; that stretch reads VKILGSVLKGQVATVIKKTINTDF. The chain crosses the membrane as a helical span at residues 408–428; the sequence is PFPFAWLTGYLAILVGAGMTF. Residues 429–485 lie on the Extracellular side of the membrane; that stretch reads IVQSSSVFTSALTPLIGIGVITIERAYPLTLGSNIGTTTTAILAALASPGNALRSSL. Residues 486 to 506 traverse the membrane as a helical segment; the sequence is QIALCHFFFNISGILLWYPIP. Over 507-525 the chain is Cytoplasmic; sequence FTRLPIRMAKGLGNISAKY. Residues 526–546 form a helical membrane-spanning segment; sequence RWFAVFYLIIFFFLIPLTVFG. At 547–552 the chain is on the extracellular side; sequence LSLAGW. The chain crosses the membrane as a helical span at residues 553–573; it reads RVLVGVGVPVVFIIILVLCLR. Over 574–689 the chain is Cytoplasmic; the sequence is LLQSRCPRVL…ASDSKTECTA (116 aa).

Belongs to the SLC34A transporter family. Highly expressed in lung. Also detected in pancreas, kidney, small intestine, ovary, testis, prostate and mammary gland. In lung, it is found in alveolar type II cells but not in bronchiolar epithelium.

The protein localises to the apical cell membrane. The enzyme catalyses 3 Na(+)(out) + phosphate(out) = 3 Na(+)(in) + phosphate(in). Involved in actively transporting phosphate into cells via Na(+) cotransport. This Homo sapiens (Human) protein is Sodium-dependent phosphate transport protein 2B (SLC34A2).